The chain runs to 314 residues: MELNHLVTGKIALNQYVHRLEQKDVSFYVHYWGAMTNHYNTLLHKHSFYEICYVVRGEGYYLEGDRTYPLREQTIFLSKPEHLHQIKSETGLFLFYVAFELSEDQSSAEWIKVMEEVKQSPFITMQLKDGEPPGLLWKTLMLQAAQPVNAFDKEILSHLSHALILSLIQTFLPYAQRPKQKQPIHTSSALLTEVKLHIKDNLSQPLKLTDVASHFHISGRHLSRLFAAELGVSYSEFVQNEKINKAAELLKSTNLSIKEIAEEIGFSVHYFTRVFSAKIGSSPGLFRSLYKDSKMTAFQINKPFQKIEQAKPHE.

One can recognise an HTH araC/xylS-type domain in the interval 192–289; sequence TEVKLHIKDN…GSSPGLFRSL (98 aa). DNA-binding regions (H-T-H motif) lie at residues 209 to 230 and 257 to 279; these read TDVASHFHISGRHLSRLFAAEL and IKEIAEEIGFSVHYFTRVFSAKI.

This is an uncharacterized protein from Bacillus subtilis (strain 168).